A 932-amino-acid chain; its full sequence is DNA mismatch repair protein MutS (932 aa).

615 to 622 (GPNMAGKS) contributes to the ATP binding site.

Belongs to the DNA mismatch repair MutS family.

In terms of biological role, this protein is involved in the repair of mismatches in DNA. It is possible that it carries out the mismatch recognition step. This protein has a weak ATPase activity. The protein is DNA mismatch repair protein MutS of Clostridium botulinum (strain Hall / ATCC 3502 / NCTC 13319 / Type A).